We begin with the raw amino-acid sequence, 301 residues long: Protein translocase subunit SecF (301 aa).

6 consecutive transmembrane segments (helical) span residues 17–37, 137–157, 163–183, 190–210, 239–261, and 272–292; these read YIAL…IFQI, DALF…AIRF, IGAT…FYIL, IFIS…VVVF, LSRT…FFGG, and ILGI…VVLL.

The protein belongs to the SecD/SecF family. SecF subfamily. As to quaternary structure, forms a complex with SecD. Part of the essential Sec protein translocation apparatus which comprises SecA, SecYEG and auxiliary proteins SecDF. Other proteins may also be involved.

It localises to the cell inner membrane. Functionally, part of the Sec protein translocase complex. Interacts with the SecYEG preprotein conducting channel. SecDF uses the proton motive force (PMF) to complete protein translocation after the ATP-dependent function of SecA. The protein is Protein translocase subunit SecF of Thermodesulfovibrio yellowstonii (strain ATCC 51303 / DSM 11347 / YP87).